Here is a 462-residue protein sequence, read N- to C-terminus: Trigger factor (462 aa).

Positions 161-246 (GDVVVIDFVG…VKEVRAPKAA (86 aa)) constitute a PPIase FKBP-type domain. Positions 428-437 (SVEDLRKDPD) are enriched in basic and acidic residues. Residues 428-462 (SVEDLRKDPDEASADGEAAPAKPKKKAAAKKKAAE) form a disordered region. Residues 449 to 462 (KPKKKAAAKKKAAE) show a composition bias toward basic residues.

This sequence belongs to the FKBP-type PPIase family. Tig subfamily.

It localises to the cytoplasm. It carries out the reaction [protein]-peptidylproline (omega=180) = [protein]-peptidylproline (omega=0). Involved in protein export. Acts as a chaperone by maintaining the newly synthesized protein in an open conformation. Functions as a peptidyl-prolyl cis-trans isomerase. The polypeptide is Trigger factor (Paramagnetospirillum magneticum (strain ATCC 700264 / AMB-1) (Magnetospirillum magneticum)).